The primary structure comprises 62 residues: Large ribosomal subunit protein bL28 (62 aa).

Belongs to the bacterial ribosomal protein bL28 family.

This is Large ribosomal subunit protein bL28 from Thermoanaerobacter sp. (strain X514).